We begin with the raw amino-acid sequence, 673 residues long: DNA ligase (673 aa).

NAD(+) contacts are provided by residues 33-37 (DYEYD), 82-83 (SL), and E113. The active-site N6-AMP-lysine intermediate is K115. R136, E170, K285, and K309 together coordinate NAD(+). 4 residues coordinate Zn(2+): C403, C406, C421, and C426. The 90-residue stretch at 583–672 (AKSDILKGYT…SHEEVEKILM (90 aa)) folds into the BRCT domain.

This sequence belongs to the NAD-dependent DNA ligase family. LigA subfamily. Mg(2+) serves as cofactor. The cofactor is Mn(2+).

The catalysed reaction is NAD(+) + (deoxyribonucleotide)n-3'-hydroxyl + 5'-phospho-(deoxyribonucleotide)m = (deoxyribonucleotide)n+m + AMP + beta-nicotinamide D-nucleotide.. DNA ligase that catalyzes the formation of phosphodiester linkages between 5'-phosphoryl and 3'-hydroxyl groups in double-stranded DNA using NAD as a coenzyme and as the energy source for the reaction. It is essential for DNA replication and repair of damaged DNA. This chain is DNA ligase, found in Caldicellulosiruptor saccharolyticus (strain ATCC 43494 / DSM 8903 / Tp8T 6331).